Consider the following 454-residue polypeptide: Serine--tRNA ligase (454 aa).

Residue 247–249 participates in L-serine binding; that stretch reads TAE. ATP is bound by residues 278–280 and V294; that span reads RKE. E301 provides a ligand contact to L-serine. Position 365-368 (365-368) interacts with ATP; the sequence is ELAS. An L-serine-binding site is contributed by T400.

It belongs to the class-II aminoacyl-tRNA synthetase family. Type-1 seryl-tRNA synthetase subfamily. As to quaternary structure, homodimer. The tRNA molecule binds across the dimer.

The protein resides in the cytoplasm. The enzyme catalyses tRNA(Ser) + L-serine + ATP = L-seryl-tRNA(Ser) + AMP + diphosphate + H(+). It catalyses the reaction tRNA(Sec) + L-serine + ATP = L-seryl-tRNA(Sec) + AMP + diphosphate + H(+). Its pathway is aminoacyl-tRNA biosynthesis; selenocysteinyl-tRNA(Sec) biosynthesis; L-seryl-tRNA(Sec) from L-serine and tRNA(Sec): step 1/1. Its function is as follows. Catalyzes the attachment of serine to tRNA(Ser). Is also able to aminoacylate tRNA(Sec) with serine, to form the misacylated tRNA L-seryl-tRNA(Sec), which will be further converted into selenocysteinyl-tRNA(Sec). The chain is Serine--tRNA ligase from Pyrobaculum calidifontis (strain DSM 21063 / JCM 11548 / VA1).